The sequence spans 167 residues: MARASGASDYRSGELSHQDERGAAHMVDITEKATTKRTAVAAGILRTSAQVVALISTGGLPKGDALATARVAGIMAAKRTSDLIPLCHQLALTGVDVDFTVGQLDIEITATVRSTDRTGVEMEALTAVSVAALTLYDMIKAVDPGALIDDIRVLHKEGGRRGTWTRR.

The interval 1–23 (MARASGASDYRSGELSHQDERGA) is disordered. Positions 11–23 (RSGELSHQDERGA) are enriched in basic and acidic residues. Residues 86–88 (LCH) and 122–123 (ME) each bind substrate. Asp137 is a catalytic residue.

It belongs to the MoaC family. As to quaternary structure, homohexamer; trimer of dimers.

It catalyses the reaction (8S)-3',8-cyclo-7,8-dihydroguanosine 5'-triphosphate = cyclic pyranopterin phosphate + diphosphate. It participates in cofactor biosynthesis; molybdopterin biosynthesis. Functionally, catalyzes the conversion of (8S)-3',8-cyclo-7,8-dihydroguanosine 5'-triphosphate to cyclic pyranopterin monophosphate (cPMP). In Mycobacterium bovis (strain ATCC BAA-935 / AF2122/97), this protein is Cyclic pyranopterin monophosphate synthase 2 (moaC2).